Here is a 169-residue protein sequence, read N- to C-terminus: Regulator of sigma D (169 aa).

The protein belongs to the Rsd/AlgQ family. Interacts with RpoD.

It localises to the cytoplasm. Binds RpoD and negatively regulates RpoD-mediated transcription activation by preventing the interaction between the primary sigma factor RpoD with the catalytic core of the RNA polymerase and with promoter DNA. May be involved in replacement of the RNA polymerase sigma subunit from RpoD to RpoS during the transition from exponential growth to the stationary phase. The sequence is that of Regulator of sigma D from Yersinia pseudotuberculosis serotype O:1b (strain IP 31758).